Here is a 180-residue protein sequence, read N- to C-terminus: Probable RNA 2'-phosphotransferase (180 aa).

The protein belongs to the KptA/TPT1 family.

Removes the 2'-phosphate from RNA via an intermediate in which the phosphate is ADP-ribosylated by NAD followed by a presumed transesterification to release the RNA and generate ADP-ribose 1''-2''-cyclic phosphate (APPR&gt;P). May function as an ADP-ribosylase. This is Probable RNA 2'-phosphotransferase from Pectobacterium atrosepticum (strain SCRI 1043 / ATCC BAA-672) (Erwinia carotovora subsp. atroseptica).